Consider the following 489-residue polypeptide: ATF/CREB activator 1 (489 aa).

The region spanning 384 to 447 (AWKRARLLER…QKMKKISRLH (64 aa)) is the bZIP domain. Positions 386-406 (KRARLLERNRIAASKCRQRKK) are basic motif. The segment at 412–419 (LQREFDQI) is leucine-zipper.

It belongs to the bZIP family.

The protein localises to the nucleus. In terms of biological role, transcriptional activator of promoters containing ATF/CREB sites. Can independently stimulate transcription through ATF/CREB sites. Important for a variety of biological functions including growth on non-optimal carbon sources. Regulates the expression of COS8. Has efficient silencing blocking activities. This chain is ATF/CREB activator 1 (ACA1), found in Saccharomyces cerevisiae (strain ATCC 204508 / S288c) (Baker's yeast).